A 540-amino-acid chain; its full sequence is DNA-(apurinic or apyrimidinic site) endonuclease (540 aa).

Residues Asn-206 and Glu-239 each coordinate Mg(2+). A disordered region spans residues 256–276; sequence NNKVYGGKKNEGEERNRGSVK. A compositionally biased stretch (basic and acidic residues) spans 263 to 276; that stretch reads KKNEGEERNRGSVK. Mg(2+) contacts are provided by Asp-400, Asn-402, Asp-530, and His-531. His-531 (proton acceptor) is an active-site residue.

Belongs to the DNA repair enzymes AP/ExoA family. Mg(2+) serves as cofactor. It depends on Mn(2+) as a cofactor. Post-translationally, may be proteolytically cleaved.

It is found in the mitochondrion. It catalyses the reaction Exonucleolytic cleavage in the 3'- to 5'-direction to yield nucleoside 5'-phosphates.. Multifunctional protein that plays a central role in mitochondrial DNA base excision repair pathway induced by oxidative stress. Has apurinic/apyrimidinic (AP) endonuclease activity towards double-stranded DNA (dsDNA). Has nucleotide incision repair (NIR) activity; acts on dsDNA with oxidized bases thymine glycol and 5,6-dihydro-2'-deoxyuridine. Has 3'-5' exonuclease; can use dsDNA templates with 3'-OH termini including blunt-end, gapped and mismatched 3'-recessed. Has 3'-phosphatase activity; cleaves 3'-phosphate from blunt, recessed and gapped dsDNA templates, followed by 3'-5' exonuclease activity. Has RNase H-like activity; cleaves RNA on 3'-recessed RNA-DNA duplex. Plays a role in merosome infection of host erythrocytes. In Plasmodium berghei (strain Anka), this protein is DNA-(apurinic or apyrimidinic site) endonuclease.